We begin with the raw amino-acid sequence, 325 residues long: Probable cell division protein WhiA (325 aa).

A DNA-binding region (H-T-H motif) is located at residues 273 to 306; that stretch reads SLEELGRLADPPMTKDAVAGRIRRLLSMADRKAK.

The protein belongs to the WhiA family.

Functionally, involved in cell division and chromosome segregation. The polypeptide is Probable cell division protein WhiA (Mycobacterium bovis (strain BCG / Tokyo 172 / ATCC 35737 / TMC 1019)).